The chain runs to 434 residues: Histidinol dehydrogenase (434 aa).

NAD(+) is bound by residues Tyr130, Gln188, and Asn211. Residues Ser237, Gln259, and His262 each contribute to the substrate site. Zn(2+)-binding residues include Gln259 and His262. Catalysis depends on proton acceptor residues Glu326 and His327. Substrate contacts are provided by His327, Asp360, Glu414, and His419. Asp360 contacts Zn(2+). His419 is a binding site for Zn(2+).

The protein belongs to the histidinol dehydrogenase family. Homodimer. It depends on Zn(2+) as a cofactor.

It carries out the reaction L-histidinol + 2 NAD(+) + H2O = L-histidine + 2 NADH + 3 H(+). It functions in the pathway amino-acid biosynthesis; L-histidine biosynthesis; L-histidine from 5-phospho-alpha-D-ribose 1-diphosphate: step 9/9. In terms of biological role, catalyzes the sequential NAD-dependent oxidations of L-histidinol to L-histidinaldehyde and then to L-histidine. The chain is Histidinol dehydrogenase from Salmonella choleraesuis (strain SC-B67).